Reading from the N-terminus, the 437-residue chain is Protein translocase subunit SecY (437 aa).

Transmembrane regions (helical) follow at residues 19–39, 69–89, 122–142, 157–177, 189–209, 219–239, 275–295, 318–338, 378–398, and 400–420; these read LFTLGIIVIYRIGTHIPIPGV, LLQITIFALGIMPYITASIIL, VALAVLQGTGLVATARSGALF, IFTTLTMVVTMTAGTAVVMWL, GMSILMFISIAATFPSALWSI, WIEFGIVIAVGLVMVALVVFV, GIIPVIFASSLLYIPALVVQF, HITVYFFLIIFFAFFYVAISF, GSLYLGLIALVPTMALAPLGA, and QNFPFGGTSILIIVGVGLETV.

This sequence belongs to the SecY/SEC61-alpha family. Component of the Sec protein translocase complex. Heterotrimer consisting of SecY, SecE and SecG subunits. The heterotrimers can form oligomers, although 1 heterotrimer is thought to be able to translocate proteins. Interacts with the ribosome. Interacts with SecDF, and other proteins may be involved. Interacts with SecA.

It localises to the cell membrane. Its function is as follows. The central subunit of the protein translocation channel SecYEG. Consists of two halves formed by TMs 1-5 and 6-10. These two domains form a lateral gate at the front which open onto the bilayer between TMs 2 and 7, and are clamped together by SecE at the back. The channel is closed by both a pore ring composed of hydrophobic SecY resides and a short helix (helix 2A) on the extracellular side of the membrane which forms a plug. The plug probably moves laterally to allow the channel to open. The ring and the pore may move independently. This is Protein translocase subunit SecY from Streptomyces scabiei.